Here is a 494-residue protein sequence, read N- to C-terminus: GDP-fucose protein O-fucosyltransferase 4 (494 aa).

The Cytoplasmic portion of the chain corresponds to 1–7 (MAARYTE). A helical; Signal-anchor for type II membrane protein transmembrane segment spans residues 8–24 (AVLAALGVLSVCSASSS). Residues 25–494 (SGSGASGKAG…EIFMKRNKNL (470 aa)) are Lumenal-facing. Asn-167 is a glycosylation site (N-linked (GlcNAc...) asparagine). Cysteines 390 and 393 form a disulfide.

The protein belongs to the glycosyltransferase 10 family.

It is found in the endoplasmic reticulum membrane. It carries out the reaction L-threonyl-[protein] + GDP-beta-L-fucose = 3-O-(alpha-L-fucosyl)-L-threonyl-[protein] + GDP + H(+). It catalyses the reaction L-seryl-[protein] + GDP-beta-L-fucose = 3-O-(alpha-L-fucosyl)-L-seryl-[protein] + GDP + H(+). It functions in the pathway protein modification; protein glycosylation. Its function is as follows. Protein O-fucosyltransferase that specifically catalyzes O-fucosylation of serine or threonine residues in EMI domains of target proteins, such as MMRN1, MMRN2 and EMID1. Attaches fucose through an O-glycosidic linkage. O-fucosylation of EMI domain-containing proteins may be required for facilitating protein folding and secretion. Also shows minor alpha-(1,3)-fucosyltransferase activity toward activity toward biantennary N-glycan acceptors. However, this was tested with a library of synthetic substrates and this activity is unsure in vivo. This is GDP-fucose protein O-fucosyltransferase 4 (Fut11) from Rattus norvegicus (Rat).